The primary structure comprises 464 residues: Siroheme synthase (464 aa).

Positions 1–203 are precorrin-2 dehydrogenase /sirohydrochlorin ferrochelatase; sequence MDYLPLFHKL…GQGAEAERLL (203 aa). Residues 22-23 and 43-44 each bind NAD(+); these read EI and PE. S128 carries the phosphoserine modification. Residues 216-464 form a uroporphyrinogen-III C-methyltransferase region; that stretch reads GEVYLVGAGP…AWFEGSQQDQ (249 aa). P225 is an S-adenosyl-L-methionine binding site. Catalysis depends on D248, which acts as the Proton acceptor. K270 (proton donor) is an active-site residue. Residues 301–303, I306, 331–332, M383, and G412 each bind S-adenosyl-L-methionine; these read GGD and TA.

This sequence in the N-terminal section; belongs to the precorrin-2 dehydrogenase / sirohydrochlorin ferrochelatase family. In the C-terminal section; belongs to the precorrin methyltransferase family.

It catalyses the reaction uroporphyrinogen III + 2 S-adenosyl-L-methionine = precorrin-2 + 2 S-adenosyl-L-homocysteine + H(+). It carries out the reaction precorrin-2 + NAD(+) = sirohydrochlorin + NADH + 2 H(+). The enzyme catalyses siroheme + 2 H(+) = sirohydrochlorin + Fe(2+). It functions in the pathway cofactor biosynthesis; adenosylcobalamin biosynthesis; precorrin-2 from uroporphyrinogen III: step 1/1. Its pathway is cofactor biosynthesis; adenosylcobalamin biosynthesis; sirohydrochlorin from precorrin-2: step 1/1. It participates in porphyrin-containing compound metabolism; siroheme biosynthesis; precorrin-2 from uroporphyrinogen III: step 1/1. The protein operates within porphyrin-containing compound metabolism; siroheme biosynthesis; siroheme from sirohydrochlorin: step 1/1. It functions in the pathway porphyrin-containing compound metabolism; siroheme biosynthesis; sirohydrochlorin from precorrin-2: step 1/1. In terms of biological role, multifunctional enzyme that catalyzes the SAM-dependent methylations of uroporphyrinogen III at position C-2 and C-7 to form precorrin-2 via precorrin-1. Then it catalyzes the NAD-dependent ring dehydrogenation of precorrin-2 to yield sirohydrochlorin. Finally, it catalyzes the ferrochelation of sirohydrochlorin to yield siroheme. This is Siroheme synthase from Pseudomonas putida (strain W619).